We begin with the raw amino-acid sequence, 391 residues long: Terminal nucleotidyltransferase 5C (391 aa).

The protein belongs to the TENT family. In terms of assembly, interacts with BCCIP and PABPC1; the interaction has no effect on TENT5C poly(A) polymerase function. Interacts with PLK4; this interaction leads to the TENT5C recruitment into the centrosome. As to expression, expressed by splenocytes, expression is increased in activated splenocytes.

It is found in the nucleus. The protein localises to the cytoplasm. It localises to the cytoskeleton. The protein resides in the microtubule organizing center. Its subcellular location is the centrosome. It carries out the reaction RNA(n) + ATP = RNA(n)-3'-adenine ribonucleotide + diphosphate. Its function is as follows. Catalyzes the transfer of one adenosine molecule from an ATP to an mRNA poly(A) tail bearing a 3'-OH terminal group and enhances mRNA stability and gene expression. Can also elongate RNA oligos ending with uridine molecule, provided that the sequence is adenosine-rich. Mainly targets mRNAs encoding endoplasmic reticulum-targeted protein. The chain is Terminal nucleotidyltransferase 5C from Mus musculus (Mouse).